The primary structure comprises 202 residues: MIAFLSGRVVSRGAETAVIDVGGVGMTVHCTPAALARLRVGEEATVATALVVREDSLTLFGFADDDERDTFERLQTASGVGPRLALAMLSVHTPDALRRAIATEDTAALTRVPGIGKKGAQRIVLELKGKLGEPGGDTAATPEQSAAAAPRNWRAQVVSGLVNLGWSTREAEAAADAVAAEAGEQPDVAALLRSALRRLSRA.

Residues 1–63 form a domain I region; the sequence is MIAFLSGRVV…EDSLTLFGFA (63 aa). The domain II stretch occupies residues 64 to 142; that stretch reads DDDERDTFER…EPGGDTAATP (79 aa). Residues 143–152 form a flexible linker region; that stretch reads EQSAAAAPRN. Residues 152–202 are domain III; it reads NWRAQVVSGLVNLGWSTREAEAAADAVAAEAGEQPDVAALLRSALRRLSRA.

This sequence belongs to the RuvA family. As to quaternary structure, homotetramer. Forms an RuvA(8)-RuvB(12)-Holliday junction (HJ) complex. HJ DNA is sandwiched between 2 RuvA tetramers; dsDNA enters through RuvA and exits via RuvB. An RuvB hexamer assembles on each DNA strand where it exits the tetramer. Each RuvB hexamer is contacted by two RuvA subunits (via domain III) on 2 adjacent RuvB subunits; this complex drives branch migration. In the full resolvosome a probable DNA-RuvA(4)-RuvB(12)-RuvC(2) complex forms which resolves the HJ.

The protein localises to the cytoplasm. The RuvA-RuvB-RuvC complex processes Holliday junction (HJ) DNA during genetic recombination and DNA repair, while the RuvA-RuvB complex plays an important role in the rescue of blocked DNA replication forks via replication fork reversal (RFR). RuvA specifically binds to HJ cruciform DNA, conferring on it an open structure. The RuvB hexamer acts as an ATP-dependent pump, pulling dsDNA into and through the RuvAB complex. HJ branch migration allows RuvC to scan DNA until it finds its consensus sequence, where it cleaves and resolves the cruciform DNA. In Thermobifida fusca (strain YX), this protein is Holliday junction branch migration complex subunit RuvA.